Here is a 353-residue protein sequence, read N- to C-terminus: Guanine nucleotide-binding protein alpha-1 subunit (353 aa).

A lipid anchor (N-myristoyl glycine) is attached at Gly2. Residue Cys3 is the site of S-palmitoyl cysteine attachment. One can recognise a G-alpha domain in the interval 32-353; sequence NEIKMLLLGA…QVNLRDCGLL (322 aa). The tract at residues 35–48 is G1 motif; it reads KMLLLGAGESGKST. GTP-binding residues include Glu43, Ser44, Gly45, Lys46, Ser47, Thr48, Asp150, Leu175, Thr181, Gly203, Asn269, Lys270, Asp272, and Ala325. Ser47 lines the Mg(2+) pocket. A G2 motif region spans residues 173–181; the sequence is DVLRSRVKT. Thr181 is a binding site for Mg(2+). The segment at 196–205 is G3 motif; it reads YKLFDVGGQR. Residues 265–272 are G4 motif; the sequence is ILFLNKID. Residues 323-328 form a G5 motif region; the sequence is TCATDT.

The protein belongs to the G-alpha family. In terms of assembly, g proteins are composed of 3 units; alpha, beta and gamma. The alpha chain contains the guanine nucleotide binding site. The cofactor is Mg(2+).

In terms of biological role, guanine nucleotide-binding proteins (G proteins) are involved as modulators or transducers in various transmembrane signaling systems. The protein is Guanine nucleotide-binding protein alpha-1 subunit (GPA1) of Mycosarcoma maydis (Corn smut fungus).